Consider the following 492-residue polypeptide: Asparagine--tRNA ligase, mitochondrial (492 aa).

This sequence belongs to the class-II aminoacyl-tRNA synthetase family.

The protein localises to the mitochondrion matrix. It catalyses the reaction tRNA(Asn) + L-asparagine + ATP = L-asparaginyl-tRNA(Asn) + AMP + diphosphate + H(+). Its function is as follows. Catalyzes the attachment of asparagine to tRNA(Asn) in the mitochondrion. This is Asparagine--tRNA ligase, mitochondrial (SLM5) from Saccharomyces cerevisiae (strain ATCC 204508 / S288c) (Baker's yeast).